A 537-amino-acid polypeptide reads, in one-letter code: 2-isopropylmalate synthase (537 aa).

The Pyruvate carboxyltransferase domain occupies 8–269 (VLIFDTTLRD…YFNGYLGRAE (262 aa)). Mn(2+) contacts are provided by Asp-17, His-208, His-210, and Asn-244. A regulatory domain region spans residues 408–537 (QLAGVQVSCG…QRAPLPAPAL (130 aa)).

The protein belongs to the alpha-IPM synthase/homocitrate synthase family. LeuA type 1 subfamily. Homodimer. The cofactor is Mn(2+).

The protein localises to the cytoplasm. The enzyme catalyses 3-methyl-2-oxobutanoate + acetyl-CoA + H2O = (2S)-2-isopropylmalate + CoA + H(+). The protein operates within amino-acid biosynthesis; L-leucine biosynthesis; L-leucine from 3-methyl-2-oxobutanoate: step 1/4. Its function is as follows. Catalyzes the condensation of the acetyl group of acetyl-CoA with 3-methyl-2-oxobutanoate (2-ketoisovalerate) to form 3-carboxy-3-hydroxy-4-methylpentanoate (2-isopropylmalate). This Synechococcus sp. (strain RCC307) protein is 2-isopropylmalate synthase.